The primary structure comprises 295 residues: Cop9 signalosome-interactor 1 (295 aa).

As to quaternary structure, component of a COP9 signalosome-like (CSN) complex, composed of RRI1/CSN5, CSN9, RRI2/CSN10, PCI8/CSN11, CSN12 and CSI1. In the complex, it probably interacts directly with CSN9 and CSN12. Interacts also with RPN5.

The protein resides in the cytoplasm. The protein localises to the nucleus. Component of the COP9 signalosome (CSN) complex that acts as an regulator of the ubiquitin (Ubl) conjugation pathway by mediating the deneddylation of the cullin subunit of SCF-type E3 ubiquitin-protein ligase complexes The CSN complex is involved in the regulation of the mating pheromone response. In Saccharomyces cerevisiae (strain ATCC 204508 / S288c) (Baker's yeast), this protein is Cop9 signalosome-interactor 1 (CSI1).